A 268-amino-acid polypeptide reads, in one-letter code: Phosphatidylglycerol--prolipoprotein diacylglyceryl transferase (268 aa).

7 consecutive transmembrane segments (helical) span residues 21-41, 54-74, 93-113, 122-142, 173-193, 203-223, and 236-256; these read WYGIIIVSAIALSIWLGGRFA, FAIILVPAGILGARLYEVFVL, GLAIHGAVLGGAIAAAIYLPM, ADVVGLVLPLAQAIGRWGNFF, VMHPTFLYESVWNLLTFGILL, GVVFSLYLVLYNAGRFLIESI, and VAQLVAAVLAILGLVLLAWFL. Arginine 137 is an a 1,2-diacyl-sn-glycero-3-phospho-(1'-sn-glycerol) binding site.

This sequence belongs to the Lgt family.

The protein resides in the cell membrane. It carries out the reaction L-cysteinyl-[prolipoprotein] + a 1,2-diacyl-sn-glycero-3-phospho-(1'-sn-glycerol) = an S-1,2-diacyl-sn-glyceryl-L-cysteinyl-[prolipoprotein] + sn-glycerol 1-phosphate + H(+). It functions in the pathway protein modification; lipoprotein biosynthesis (diacylglyceryl transfer). Its function is as follows. Catalyzes the transfer of the diacylglyceryl group from phosphatidylglycerol to the sulfhydryl group of the N-terminal cysteine of a prolipoprotein, the first step in the formation of mature lipoproteins. This Symbiobacterium thermophilum (strain DSM 24528 / JCM 14929 / IAM 14863 / T) protein is Phosphatidylglycerol--prolipoprotein diacylglyceryl transferase.